A 311-amino-acid polypeptide reads, in one-letter code: Pyrimidine-specific ribonucleoside hydrolase RihA (311 aa).

The active site involves His-240.

The protein belongs to the IUNH family. RihA subfamily.

In terms of biological role, hydrolyzes cytidine or uridine to ribose and cytosine or uracil, respectively. The protein is Pyrimidine-specific ribonucleoside hydrolase RihA of Salmonella arizonae (strain ATCC BAA-731 / CDC346-86 / RSK2980).